A 263-amino-acid polypeptide reads, in one-letter code: Ribonuclease HII (263 aa).

Residues 71 to 262 enclose the RNase H type-2 domain; it reads KAIAGIDEVG…VKSMCCDSTN (192 aa). A divalent metal cation is bound by residues Asp-77, Glu-78, and Asp-172.

The protein belongs to the RNase HII family. The cofactor is Mn(2+). Mg(2+) is required as a cofactor.

It is found in the cytoplasm. It carries out the reaction Endonucleolytic cleavage to 5'-phosphomonoester.. Its function is as follows. Endonuclease that specifically degrades the RNA of RNA-DNA hybrids. The protein is Ribonuclease HII of Streptococcus pyogenes serotype M1.